Here is an 869-residue protein sequence, read N- to C-terminus: Histone deacetylase 4 (869 aa).

3 disordered regions span residues 1-25 (MEEASSSTGSAGGAGPSVPNLPSTS), 128-167 (SSSNGNLSVPQTPTKEHHPTAPTSNRKCDLPRSNSTTISQ), and 180-218 (RSKGESNSQSNLMSNSVTANGNGHDNGRKLKNSNSQVNV). A compositionally biased stretch (polar residues) spans 184–202 (ESNSQSNLMSNSVTANGNG). Ser251 is modified (phosphoserine). The segment at 460 to 802 (CTTGLGYDQA…VQALIGESDD (343 aa)) is histone deacetylase. His608 is an active-site residue.

Belongs to the histone deacetylase family. HD type 2 subfamily. Interacts with mef-2. Post-translationally, phosphorylated by serine/threonine-protein kinase kin-29 at Ser-251; the phosphorylation inhibits repression of transcription by mef-2. May be phosphorylated by either cyclic-AMP dependent or cyclic-GMP dependent protein kinases. As to expression, expressed in body-wall muscle cells, hypodermal seam cells and neuronal cells including sensory amphid neuronal processes, the nerve ring, ventral nerve cords and motor neuronal commissures.

It localises to the nucleus. The catalysed reaction is N(6)-acetyl-L-lysyl-[histone] + H2O = L-lysyl-[histone] + acetate. Responsible for the deacetylation of lysine residues on the N-terminal part of the core histones (H2A, H2B, H3 and H4). Histone deacetylation gives a tag for epigenetic repression and plays an important role in transcriptional regulation, cell cycle progression and developmental events. Histone deacetylases act via the formation of large multiprotein complexes. Involved in transduction of sensory signals, together with egl-4, kin-29 and mef-2; binding to transcription factor mef-2 enables negative modulation of chemoreceptor gene expression in chemosensory neurons. May be involved in muscle development. This Caenorhabditis elegans protein is Histone deacetylase 4 (hda-4).